The following is a 750-amino-acid chain: Glutamate carboxypeptidase 2 (750 aa).

Topologically, residues 1 to 19 (MWNLLHETDSAVATARRPR) are cytoplasmic. The residue at position 10 (Ser10) is a Phosphoserine. Residues 20-43 (WLCAGALVLAGGFFLLGFLFGWFI) form a helical; Signal-anchor for type II membrane protein membrane-spanning segment. Residues 44–750 (KSSNEATNIT…AAAETLSEVA (707 aa)) are Extracellular-facing. Residues Asn51, Asn76, Asn121, Asn140, Asn153, and Asn195 are each glycosylated (N-linked (GlcNAc...) asparagine). Residues Arg210 and Asn257 each coordinate substrate. The Ca(2+) site is built by Thr269 and Tyr272. Positions 274 to 587 (ANEYAYRRGI…QVRGGMVFEL (314 aa)) are NAALADase. N-linked (GlcNAc...) asparagine glycosylation is present at Asn336. Residues His377 and Asp387 each contribute to the Zn(2+) site. Glu424 contacts substrate. The Nucleophile; for NAALADase activity role is filled by Glu424. A Zn(2+)-binding site is contributed by Glu425. Residues Glu433 and Glu436 each contribute to the Ca(2+) site. Asp453 lines the Zn(2+) pocket. Asn459 and Asn476 each carry an N-linked (GlcNAc...) asparagine glycan. Substrate-binding positions include 517–518 (SG), Asn519, 534–536 (RAR), Tyr552, and 552–553 (YH). Position 553 (His553) interacts with Zn(2+). Catalysis depends on Ser628, which acts as the Charge relay system. A glycan (N-linked (GlcNAc...) asparagine) is linked at Asn638. Residues Asp666 and His689 each act as charge relay system in the active site. Substrate is bound at residue 699–700 (KY).

This sequence belongs to the peptidase M28 family. M28B subfamily. Homodimer. The cofactor is Zn(2+). The first two amino acids at the N-terminus of isoform PSMA' appear to be cleaved by limited proteolysis. In terms of processing, the N-terminus is blocked. In terms of tissue distribution, highly expressed in prostate epithelium. Detected in urinary bladder, kidney, testis, ovary, fallopian tube, breast, adrenal gland, liver, esophagus, stomach, small intestine, colon and brain (at protein level). Detected in the small intestine, brain, kidney, liver, spleen, colon, trachea, spinal cord and the capillary endothelium of a variety of tumors. Expressed specifically in jejunum brush border membranes. In the brain, highly expressed in the ventral striatum and brain stem. Also expressed in fetal liver and kidney. Isoform PSMA' is the most abundant form in normal prostate. Isoform PSMA-1 is the most abundant form in primary prostate tumors. Isoform PSMA-9 is specifically expressed in prostate cancer.

The protein resides in the cell membrane. The protein localises to the cytoplasm. It carries out the reaction Release of an unsubstituted, C-terminal glutamyl residue, typically from Ac-Asp-Glu or folylpoly-gamma-glutamates.. With respect to regulation, the NAALADase activity is inhibited by beta-NAAG, quisqualic acid, 2-(phosphonomethyl) pentanedioic acid (PMPA) and EDTA. Activated by cobalt. In terms of biological role, has both folate hydrolase and N-acetylated-alpha-linked-acidic dipeptidase (NAALADase) activity. Has a preference for tri-alpha-glutamate peptides. In the intestine, required for the uptake of folate. In the brain, modulates excitatory neurotransmission through the hydrolysis of the neuropeptide, N-aceylaspartylglutamate (NAAG), thereby releasing glutamate. Involved in prostate tumor progression. Its function is as follows. Also exhibits a dipeptidyl-peptidase IV type activity. In vitro, cleaves Gly-Pro-AMC. This Homo sapiens (Human) protein is Glutamate carboxypeptidase 2.